We begin with the raw amino-acid sequence, 216 residues long: Uracil-DNA glycosylase (216 aa).

The Proton acceptor role is filled by aspartate 59.

It belongs to the uracil-DNA glycosylase (UDG) superfamily. UNG family.

It is found in the cytoplasm. The enzyme catalyses Hydrolyzes single-stranded DNA or mismatched double-stranded DNA and polynucleotides, releasing free uracil.. Functionally, excises uracil residues from the DNA which can arise as a result of misincorporation of dUMP residues by DNA polymerase or due to deamination of cytosine. In Idiomarina loihiensis (strain ATCC BAA-735 / DSM 15497 / L2-TR), this protein is Uracil-DNA glycosylase.